The chain runs to 281 residues: 3-hydroxyanthranilate 3,4-dioxygenase (281 aa).

Positions 1 to 162 (MAGVTAIEIP…SNEFKTGKPG (162 aa)) are domain A (catalytic). Arg45 lines the O2 pocket. Fe cation is bound by residues His49, Glu55, and His93. Glu55 contributes to the substrate binding site. Substrate-binding residues include Arg97 and Glu107. Positions 163–179 (KGTFACNAPYEARWTDL) are linker. A domain B region spans residues 180–281 (PVPINRKEFI…GFAITIRMPG (102 aa)).

Belongs to the 3-HAO family. Fe(2+) is required as a cofactor.

The protein resides in the cytoplasm. The catalysed reaction is 3-hydroxyanthranilate + O2 = (2Z,4Z)-2-amino-3-carboxymuconate 6-semialdehyde. The protein operates within cofactor biosynthesis; NAD(+) biosynthesis; quinolinate from L-kynurenine: step 3/3. Its function is as follows. Catalyzes the oxidative ring opening of 3-hydroxyanthranilate to 2-amino-3-carboxymuconate semialdehyde, which spontaneously cyclizes to quinolinate. In Caenorhabditis briggsae, this protein is 3-hydroxyanthranilate 3,4-dioxygenase (haao-1).